A 214-amino-acid chain; its full sequence is Pyridoxine/pyridoxamine 5'-phosphate oxidase (214 aa).

Residues 9–12 (RREY) and lysine 67 each bind substrate. Residues 62 to 67 (RTVLLK), 77 to 78 (YS), arginine 83, lysine 84, and glutamine 106 contribute to the FMN site. Residues tyrosine 124, arginine 128, and serine 132 each coordinate substrate. FMN-binding positions include 141-142 (QS) and tryptophan 186. 192 to 194 (RLH) contributes to the substrate binding site. Arginine 196 is a binding site for FMN.

It belongs to the pyridoxamine 5'-phosphate oxidase family. As to quaternary structure, homodimer. FMN serves as cofactor.

It carries out the reaction pyridoxamine 5'-phosphate + O2 + H2O = pyridoxal 5'-phosphate + H2O2 + NH4(+). The catalysed reaction is pyridoxine 5'-phosphate + O2 = pyridoxal 5'-phosphate + H2O2. It functions in the pathway cofactor metabolism; pyridoxal 5'-phosphate salvage; pyridoxal 5'-phosphate from pyridoxamine 5'-phosphate: step 1/1. The protein operates within cofactor metabolism; pyridoxal 5'-phosphate salvage; pyridoxal 5'-phosphate from pyridoxine 5'-phosphate: step 1/1. In terms of biological role, catalyzes the oxidation of either pyridoxine 5'-phosphate (PNP) or pyridoxamine 5'-phosphate (PMP) into pyridoxal 5'-phosphate (PLP). The protein is Pyridoxine/pyridoxamine 5'-phosphate oxidase of Porphyromonas gingivalis (strain ATCC 33277 / DSM 20709 / CIP 103683 / JCM 12257 / NCTC 11834 / 2561).